Here is a 1187-residue protein sequence, read N- to C-terminus: DENN domain and WD repeat-containing protein SCD1 (1187 aa).

One can recognise a uDENN domain in the interval 19–179 (TVDGDLGFHG…NVPLPTPGKD (161 aa)). Residues 199–330 (SLPQADISLQ…EFSTLRNDIL (132 aa)) enclose the cDENN domain. The region spanning 332–437 (LLHPNVVAID…ERRLSSDEKS (106 aa)) is the dDENN domain. Disordered regions lie at residues 508 to 536 (SGALESNGRHPPSSPPGKNTKEDNFSSME) and 765 to 793 (SAGLPSPRPKDVSVSDETQQPSEASGRSW). Residues 526-536 (NTKEDNFSSME) are compositionally biased toward basic and acidic residues. Over residues 779-793 (SDETQQPSEASGRSW) the composition is skewed to polar residues. WD repeat units follow at residues 841–892 (GHGG…SELR), 897–934 (GHTGTVRAISSDRGKIVSGSDDLSVIVWDKQTTQLLEE), 937–975 (GHDSQVSCVKMLSGERVLTAAHDGTVKMWDVRTDMCVAT), 978–1017 (RCSSAILSLEYDDSTGILAAAGRDTVANIWDIRSGKQMHK), 1020–1057 (GHTKWIRSIRMVEDTLITGSDDWTARVWSVSRGSCDAV), 1060–1099 (CHAGPVQSVEYSPFDKGIITGSADGLLRFWENDEGGIKCV), 1104–1141 (LHSSSILSINAGENWLGIGAADNSMSLFHRPSNAGTKV), and 1152–1187 (RTAAVVRCVASDLERKRICSGGRNGVLRLWDATINI).

Interacts with FLS2. In terms of tissue distribution, expressed in roots, rosette and cauline leaves, buds and flowers.

It localises to the cell membrane. The protein localises to the cytoplasmic vesicle. The protein resides in the clathrin-coated vesicle. Its function is as follows. Involved in growth and development through its role in cytokinesis and polarized cell expansion. Required for plasma membrane internalization. May function in clathrin-mediated membrane trafficking, including plasma membrane endocytosis, essential to both cytokinesis and cell expansion. Acts as a negative regulator of basal resistance against bacteria. This is DENN domain and WD repeat-containing protein SCD1 from Arabidopsis thaliana (Mouse-ear cress).